Here is a 278-residue protein sequence, read N- to C-terminus: Large ribosomal subunit protein uL2 (278 aa).

2 disordered regions span residues 27-57 and 224-278; these read STPE…QGGG and VAMN…NKKR. The segment covering 258–278 has biased composition (basic residues); it reads RSPKKASSKYIVRRRKTNKKR.

Belongs to the universal ribosomal protein uL2 family. In terms of assembly, part of the 50S ribosomal subunit. Forms a bridge to the 30S subunit in the 70S ribosome.

One of the primary rRNA binding proteins. Required for association of the 30S and 50S subunits to form the 70S ribosome, for tRNA binding and peptide bond formation. It has been suggested to have peptidyltransferase activity; this is somewhat controversial. Makes several contacts with the 16S rRNA in the 70S ribosome. The chain is Large ribosomal subunit protein uL2 from Streptomyces avermitilis (strain ATCC 31267 / DSM 46492 / JCM 5070 / NBRC 14893 / NCIMB 12804 / NRRL 8165 / MA-4680).